The sequence spans 307 residues: Chaperone protein DnaJ 2 (307 aa).

Residues 6 to 71 enclose the J domain; it reads NYYQILGVPR…TKRRELDSRL (66 aa). Residues 69 to 133 are disordered; the sequence is SRLFGRFRRP…TRRTKVVSPA (65 aa). The segment covering 88 to 99 has biased composition (polar residues); sequence NGGRSPNGTSVN. Residues 100–114 are compositionally biased toward low complexity; that stretch reads GQVRTPTGRTGTRQP.

This sequence belongs to the DnaJ family. In terms of assembly, homodimer. Requires Zn(2+) as cofactor.

The protein resides in the cytoplasm. Functionally, participates actively in the response to hyperosmotic and heat shock by preventing the aggregation of stress-denatured proteins and by disaggregating proteins, also in an autonomous, DnaK-independent fashion. Unfolded proteins bind initially to DnaJ; upon interaction with the DnaJ-bound protein, DnaK hydrolyzes its bound ATP, resulting in the formation of a stable complex. GrpE releases ADP from DnaK; ATP binding to DnaK triggers the release of the substrate protein, thus completing the reaction cycle. Several rounds of ATP-dependent interactions between DnaJ, DnaK and GrpE are required for fully efficient folding. Also involved, together with DnaK and GrpE, in the DNA replication of plasmids through activation of initiation proteins. This is Chaperone protein DnaJ 2 (dnaJ2) from Synechocystis sp. (strain ATCC 27184 / PCC 6803 / Kazusa).